A 105-amino-acid chain; its full sequence is Met repressor (105 aa).

This sequence belongs to the MetJ family. In terms of assembly, homodimer.

Its subcellular location is the cytoplasm. In terms of biological role, this regulatory protein, when combined with SAM (S-adenosylmethionine) represses the expression of the methionine regulon and of enzymes involved in SAM synthesis. This Haemophilus influenzae (strain 86-028NP) protein is Met repressor.